A 138-amino-acid polypeptide reads, in one-letter code: Holo-[acyl-carrier-protein] synthase (138 aa).

Mg(2+) is bound by residues Asp-8 and Glu-54.

This sequence belongs to the P-Pant transferase superfamily. AcpS family. Mg(2+) serves as cofactor.

It is found in the cytoplasm. The enzyme catalyses apo-[ACP] + CoA = holo-[ACP] + adenosine 3',5'-bisphosphate + H(+). Functionally, transfers the 4'-phosphopantetheine moiety from coenzyme A to a Ser of acyl-carrier-protein. The chain is Holo-[acyl-carrier-protein] synthase from Roseiflexus sp. (strain RS-1).